A 258-amino-acid chain; its full sequence is Large ribosomal subunit protein uL5c (258 aa).

The transit peptide at Met1–Ala38 directs the protein to the chloroplast.

In terms of assembly, component of the chloroplast large ribosomal subunit (LSU). Mature 70S chloroplast ribosomes of higher plants consist of a small (30S) and a large (50S) subunit. The 30S small subunit contains 1 molecule of ribosomal RNA (16S rRNA) and 24 different proteins. The 50S large subunit contains 3 rRNA molecules (23S, 5S and 4.5S rRNA) and 33 different proteins.

The protein resides in the plastid. It localises to the chloroplast. Its function is as follows. Component of the chloroplast ribosome (chloro-ribosome), a dedicated translation machinery responsible for the synthesis of chloroplast genome-encoded proteins, including proteins of the transcription and translation machinery and components of the photosynthetic apparatus. This chain is Large ribosomal subunit protein uL5c (RPL5), found in Spinacia oleracea (Spinach).